A 211-amino-acid polypeptide reads, in one-letter code: Redox-sensing transcriptional repressor Rex (211 aa).

The segment at residues 17–56 (KYHRYLEELLRNEVDRISSKELSKKIGFTASQIRQDFNCF) is a DNA-binding region (H-T-H motif). 91–96 (GGGNIG) lines the NAD(+) pocket.

Belongs to the transcriptional regulatory Rex family. As to quaternary structure, homodimer.

The protein resides in the cytoplasm. Modulates transcription in response to changes in cellular NADH/NAD(+) redox state. This chain is Redox-sensing transcriptional repressor Rex, found in Clostridium tetani (strain Massachusetts / E88).